A 796-amino-acid polypeptide reads, in one-letter code: Fibroblast growth factor receptor 3 (796 aa).

A signal peptide spans 1 to 19; it reads MLVWLCGLCLVTLAGGRSA. Over 20–358 the chain is Extracellular; it reads ARLPLTEGRP…AEPVPDVDTS (339 aa). Positions 21–119 constitute an Ig-like C2-type 1 domain; that stretch reads RLPLTEGRPT…VLRNVTVRVT (99 aa). Residues Cys56 and Cys102 are joined by a disulfide bond. 2 N-linked (GlcNAc...) asparagine glycosylation sites follow: Asn91 and Asn113. Positions 117-142 are disordered; it reads RVTDSPSSGDDEDDDEESESANAPKF. Over residues 125 to 135 the composition is skewed to acidic residues; it reads GDDEDDDEESE. Ig-like C2-type domains lie at 140–233 and 239–344; these read PKFT…YTLD and PHRP…AWLT. The cysteines at positions 165 and 217 are disulfide-linked. Asn214, Asn251, Asn283, Asn304, and Asn317 each carry an N-linked (GlcNAc...) asparagine glycan. A disulfide bridge links Cys264 with Cys328. Residues 359–379 traverse the membrane as a helical segment; it reads VSILAAAGCVAVVILVVIIIF. Residues 380 to 796 are Cytoplasmic-facing; sequence TYKMKMPSKK…HQQYNGVIRT (417 aa). The region spanning 457-746 is the Protein kinase domain; that stretch reads LTLGKPLGEG…LTVTSTDEYL (290 aa). Residues 463-471 and Lys493 each bind ATP; that span reads LGEGCFGQV. Asp602 acts as the Proton acceptor in catalysis. 4 positions are modified to phosphotyrosine; by autocatalysis: Tyr632, Tyr633, Tyr709, and Tyr745.

Belongs to the protein kinase superfamily. Tyr protein kinase family. Fibroblast growth factor receptor subfamily. In terms of assembly, monomer. Homodimer after ligand binding. Post-translationally, autophosphorylated. Binding of FGF family members together with heparan sulfate proteoglycan or heparin promotes receptor dimerization and autophosphorylation on tyrosine residues. Autophosphorylation occurs in trans between the two FGFR molecules present in the dimer. In terms of tissue distribution, undetectable in the adult skeletal muscle. Low levels of expression were detected in the liver, lung and kidney. Medium levels of expression were detected in the heart, spleen, intestine and eye. Highest expression is observed in the testis.

It localises to the cell membrane. The enzyme catalyses L-tyrosyl-[protein] + ATP = O-phospho-L-tyrosyl-[protein] + ADP + H(+). Its activity is regulated as follows. Present in an inactive conformation in the absence of bound ligand. Ligand binding leads to dimerization and activation by autophosphorylation on tyrosine residues. Its function is as follows. Tyrosine-protein kinase that acts as a cell-surface receptor for fibroblast growth factors and plays an essential role in the regulation of cell proliferation, differentiation and apoptosis. Plays an essential role in the regulation of chondrocyte differentiation, proliferation and apoptosis, and is required for normal skeleton development. Regulates both osteogenesis and postnatal bone mineralization by osteoblasts. Promotes apoptosis in chondrocytes, but can also promote cancer cell proliferation. Phosphorylates PLCG1, CBL and FRS2. Ligand binding leads to the activation of several signaling cascades. Activation of PLCG1 leads to the production of the cellular signaling molecules diacylglycerol and inositol 1,4,5-trisphosphate. Phosphorylation of FRS2 triggers recruitment of GRB2, GAB1, PIK3R1 and SOS1, and mediates activation of RAS, MAPK1/ERK2, MAPK3/ERK1 and the MAP kinase signaling pathway, as well as of the AKT1 signaling pathway. This chain is Fibroblast growth factor receptor 3 (FGFR3), found in Pleurodeles waltl (Iberian ribbed newt).